Reading from the N-terminus, the 313-residue chain is ADP-L-glycero-D-manno-heptose-6-epimerase (313 aa).

NADP(+)-binding positions include 10–11, 31–32, Lys-38, Arg-53, 75–79, and Asn-92; these read MI, DN, and EGACS. Catalysis depends on Tyr-139, which acts as the Proton acceptor. An NADP(+)-binding site is contributed by Lys-143. Substrate is bound at residue Asn-174. 2 residues coordinate NADP(+): Val-175 and Lys-183. Lys-183 serves as the catalytic Proton acceptor. Residues Ser-185, His-192, 206–209, Arg-214, and Tyr-277 each bind substrate; that span reads FAGS.

Belongs to the NAD(P)-dependent epimerase/dehydratase family. HldD subfamily. As to quaternary structure, homopentamer. The cofactor is NADP(+).

The enzyme catalyses ADP-D-glycero-beta-D-manno-heptose = ADP-L-glycero-beta-D-manno-heptose. It participates in nucleotide-sugar biosynthesis; ADP-L-glycero-beta-D-manno-heptose biosynthesis; ADP-L-glycero-beta-D-manno-heptose from D-glycero-beta-D-manno-heptose 7-phosphate: step 4/4. Its pathway is bacterial outer membrane biogenesis; LPS core biosynthesis. Its function is as follows. Catalyzes the interconversion between ADP-D-glycero-beta-D-manno-heptose and ADP-L-glycero-beta-D-manno-heptose via an epimerization at carbon 6 of the heptose. In Vibrio vulnificus (strain YJ016), this protein is ADP-L-glycero-D-manno-heptose-6-epimerase.